The following is a 473-amino-acid chain: ATP synthase subunit beta (473 aa).

158–165 is an ATP binding site; the sequence is GGAGVGKT.

Belongs to the ATPase alpha/beta chains family. As to quaternary structure, F-type ATPases have 2 components, CF(1) - the catalytic core - and CF(0) - the membrane proton channel. CF(1) has five subunits: alpha(3), beta(3), gamma(1), delta(1), epsilon(1). CF(0) has three main subunits: a(1), b(2) and c(9-12). The alpha and beta chains form an alternating ring which encloses part of the gamma chain. CF(1) is attached to CF(0) by a central stalk formed by the gamma and epsilon chains, while a peripheral stalk is formed by the delta and b chains.

Its subcellular location is the cell membrane. It catalyses the reaction ATP + H2O + 4 H(+)(in) = ADP + phosphate + 5 H(+)(out). In terms of biological role, produces ATP from ADP in the presence of a proton gradient across the membrane. The catalytic sites are hosted primarily by the beta subunits. This Geobacillus sp. (strain WCH70) protein is ATP synthase subunit beta.